Consider the following 496-residue polypeptide: 1-aminocyclopropane-1-carboxylate synthase 4 (496 aa).

Lysine 300 bears the N6-(pyridoxal phosphate)lysine mark.

The protein belongs to the class-I pyridoxal-phosphate-dependent aminotransferase family. Pyridoxal 5'-phosphate serves as cofactor. Expressed in leaves. Expressed in shoots and leaf blades. Expressed at low levels in leaf sheaths.

It catalyses the reaction S-adenosyl-L-methionine = 1-aminocyclopropane-1-carboxylate + S-methyl-5'-thioadenosine + H(+). It participates in alkene biosynthesis; ethylene biosynthesis via S-adenosyl-L-methionine; ethylene from S-adenosyl-L-methionine: step 1/2. In terms of biological role, catalyzes the formation of 1-aminocyclopropane-1-carboxylate, a direct precursor of ethylene in higher plants. The sequence is that of 1-aminocyclopropane-1-carboxylate synthase 4 from Oryza sativa subsp. japonica (Rice).